A 449-amino-acid chain; its full sequence is Adenylosuccinate synthetase (449 aa).

GTP is bound by residues 12–18 and 40–42; these read GDEGKGK and GHT. Residue Asp13 is the Proton acceptor of the active site. Mg(2+)-binding residues include Asp13 and Gly40. IMP-binding positions include 13-16, 38-41, Thr128, Arg142, Gln223, Thr238, and Arg302; these read DEGK and NAGH. The Proton donor role is filled by His41. 298–304 is a binding site for substrate; it reads TTTGRRR. GTP-binding positions include Arg304, 330–332, and 412–414; these read KLD and SLG.

It belongs to the adenylosuccinate synthetase family. As to quaternary structure, homodimer. It depends on Mg(2+) as a cofactor.

The protein resides in the cytoplasm. The catalysed reaction is IMP + L-aspartate + GTP = N(6)-(1,2-dicarboxyethyl)-AMP + GDP + phosphate + 2 H(+). It functions in the pathway purine metabolism; AMP biosynthesis via de novo pathway; AMP from IMP: step 1/2. Plays an important role in the de novo pathway of purine nucleotide biosynthesis. Catalyzes the first committed step in the biosynthesis of AMP from IMP. This Gloeothece citriformis (strain PCC 7424) (Cyanothece sp. (strain PCC 7424)) protein is Adenylosuccinate synthetase.